We begin with the raw amino-acid sequence, 559 residues long: Putative helicase 22 (559 aa).

Residues 186–347 (VSDVNVIGNG…EIMGLLGKIS (162 aa)) form the Helicase ATP-binding domain. Residue 199 to 206 (APTGSGKS) participates in ATP binding. Residues 300 to 303 (DEAH) carry the DEAH box motif. The 143-residue stretch at 410–552 (TNKQIISKIK…KMNFIENEYN (143 aa)) folds into the Helicase C-terminal domain.

The sequence is that of Putative helicase 22 (SIFV0022) from Sulfolobus islandicus filamentous virus (isolate Iceland/Hveragerdi) (SIFV).